A 351-amino-acid polypeptide reads, in one-letter code: DNA polymerase IV (351 aa).

Positions 4–185 constitute a UmuC domain; sequence IIHVDMDCFF…LPLAKIPGVG (182 aa). Mg(2+)-binding residues include D8 and D103. E104 is an active-site residue.

It belongs to the DNA polymerase type-Y family. Monomer. Requires Mg(2+) as cofactor.

It localises to the cytoplasm. It catalyses the reaction DNA(n) + a 2'-deoxyribonucleoside 5'-triphosphate = DNA(n+1) + diphosphate. Functionally, poorly processive, error-prone DNA polymerase involved in untargeted mutagenesis. Copies undamaged DNA at stalled replication forks, which arise in vivo from mismatched or misaligned primer ends. These misaligned primers can be extended by PolIV. Exhibits no 3'-5' exonuclease (proofreading) activity. May be involved in translesional synthesis, in conjunction with the beta clamp from PolIII. The protein is DNA polymerase IV of Salmonella arizonae (strain ATCC BAA-731 / CDC346-86 / RSK2980).